The following is a 532-amino-acid chain: MKFDPEQVKLETKEDFDRAWSTSGKYVAQPDSTKDYTIHNEPGKAHPVYDTLNKLREAYINLGFEEMVNPIIIEESDIFRQFNYEALAVLDRVYYIGGLPRPNVGISDERFAQIEQIFGRSLTDSDKETIREILHKYKKGEIEGDDLVADLSAGLQIQDSKVAVMIDHVFPEFKKLEPVCSRKTLRSHMTSGWFITLGAMVDRRTTPLKLFSVDLVFRREQEENADRLRAYHSASCVIMDPDVTVEHGKAVAAGLLRQFGFSQFKFKPDDKRSKYYTPDTQIEVYGYHPALKGSNTKYKDGWVEIATFGIYSATALSQYDIPYPVMNLGLGVERLAMILHQAKDMRDMVYPQFKEEWDLTDAEIARMISMEKHPQTKEGHDIAMAIIATVERNGSAPSPCRFDVWEGTINGKKIKVYLEEKEEGKKLCGGAIMNEAYVYKGDLLGIPLNNPKFAEVAEKGAPTGIRNIDAIANAAARNIEEGVYETTVKMSRAPGDVYVKVDPVALRYIQGKKHKIDFRGPVFTSIKAELIE.

Substrate contacts are provided by residues 188–190, 233–235, 275–276, and Asn-327; these read HMT, SAS, and YY.

The protein belongs to the class-II aminoacyl-tRNA synthetase family. O-phosphoseryl-tRNA(Cys) synthetase subfamily. As to quaternary structure, homotetramer. Interacts with SepCysS.

The enzyme catalyses tRNA(Cys) + O-phospho-L-serine + ATP = O-phospho-L-seryl-tRNA(Cys) + AMP + diphosphate. In terms of biological role, catalyzes the attachment of O-phosphoserine (Sep) to tRNA(Cys). This chain is O-phosphoserine--tRNA(Cys) ligase, found in Methanocella arvoryzae (strain DSM 22066 / NBRC 105507 / MRE50).